The chain runs to 229 residues: UPF0758 protein Mbar_A2303 (229 aa).

In terms of domain architecture, MPN spans 106-228 (KVCSPKDVYT…YVSLKDEGFV (123 aa)). Zn(2+) contacts are provided by histidine 177, histidine 179, and aspartate 190. The JAMM motif signature appears at 177 to 190 (HNHPSGDPSPSRED).

The protein belongs to the UPF0758 family.

This is UPF0758 protein Mbar_A2303 from Methanosarcina barkeri (strain Fusaro / DSM 804).